Here is a 121-residue protein sequence, read N- to C-terminus: Large ribosomal subunit protein bL20 (121 aa).

It belongs to the bacterial ribosomal protein bL20 family.

Its function is as follows. Binds directly to 23S ribosomal RNA and is necessary for the in vitro assembly process of the 50S ribosomal subunit. It is not involved in the protein synthesizing functions of that subunit. The chain is Large ribosomal subunit protein bL20 from Chlamydia felis (strain Fe/C-56) (Chlamydophila felis).